The chain runs to 199 residues: Protein-methionine-sulfoxide reductase heme-binding subunit MsrQ (199 aa).

The next 5 membrane-spanning stretches (helical) occupy residues 13-33, 79-99, 120-140, 147-167, and 169-189; these read VLLH…VDQG, LLGL…ALLE, LGVI…QIMM, WQKL…HYLW, and VKTL…LLLF.

The protein belongs to the MsrQ family. Heterodimer of a catalytic subunit (MsrP) and a heme-binding subunit (MsrQ). The cofactor is FMN. Heme b is required as a cofactor.

The protein localises to the cell inner membrane. Functionally, part of the MsrPQ system that repairs oxidized periplasmic proteins containing methionine sulfoxide residues (Met-O), using respiratory chain electrons. Thus protects these proteins from oxidative-stress damage caused by reactive species of oxygen and chlorine generated by the host defense mechanisms. MsrPQ is essential for the maintenance of envelope integrity under bleach stress, rescuing a wide series of structurally unrelated periplasmic proteins from methionine oxidation. MsrQ provides electrons for reduction to the reductase catalytic subunit MsrP, using the quinone pool of the respiratory chain. The sequence is that of Protein-methionine-sulfoxide reductase heme-binding subunit MsrQ from Pectobacterium carotovorum subsp. carotovorum (strain PC1).